The chain runs to 105 residues: MTSHFVTRDGSTWMPQYLTAIDAMTCIGCGRCFKVCSREVMHLHGIDESGEILGACDGEDDDFAGELSRTIMVVDHAGRCIGCGACARVCPKNCQTHVAADEIVA.

2 4Fe-4S ferredoxin-type domains span residues Tyr-17 to Ile-46 and Thr-70 to Ala-100. Residues Cys-26, Cys-29, Cys-32, Cys-36, Cys-80, Cys-83, Cys-86, and Cys-90 each contribute to the [4Fe-4S] cluster site.

It depends on [4Fe-4S] cluster as a cofactor.

Functionally, ferredoxins are iron-sulfur proteins that transfer electrons in a wide variety of metabolic reactions. The chain is Putative ferredoxin-3 (fdxB) from Sinorhizobium fredii (strain NBRC 101917 / NGR234).